The following is a 519-amino-acid chain: Cytochrome P450 52A13 (519 aa).

C466 lines the heme pocket.

This sequence belongs to the cytochrome P450 family. The cofactor is heme.

The protein resides in the membrane. Together with an NADPH cytochrome P450 the enzyme system catalyzes the terminal hydroxylation as the first step in the assimilation of alkanes and fatty acids. This is Cytochrome P450 52A13 (CYP52A13) from Debaryomyces hansenii (Yeast).